Reading from the N-terminus, the 508-residue chain is Light-independent protochlorophyllide reductase subunit B (508 aa).

Position 36 (aspartate 36) interacts with [4Fe-4S] cluster. The active-site Proton donor is aspartate 294. Substrate is bound at residue 429–430; it reads GM.

The protein belongs to the ChlB/BchB/BchZ family. As to quaternary structure, protochlorophyllide reductase is composed of three subunits; ChlL, ChlN and ChlB. Forms a heterotetramer of two ChlB and two ChlN subunits. Requires [4Fe-4S] cluster as cofactor.

It catalyses the reaction chlorophyllide a + oxidized 2[4Fe-4S]-[ferredoxin] + 2 ADP + 2 phosphate = protochlorophyllide a + reduced 2[4Fe-4S]-[ferredoxin] + 2 ATP + 2 H2O. The protein operates within porphyrin-containing compound metabolism; chlorophyll biosynthesis (light-independent). Component of the dark-operative protochlorophyllide reductase (DPOR) that uses Mg-ATP and reduced ferredoxin to reduce ring D of protochlorophyllide (Pchlide) to form chlorophyllide a (Chlide). This reaction is light-independent. The NB-protein (ChlN-ChlB) is the catalytic component of the complex. The sequence is that of Light-independent protochlorophyllide reductase subunit B from Nostoc sp. (strain PCC 7120 / SAG 25.82 / UTEX 2576).